The sequence spans 605 residues: Isocitrate dehydrogenase kinase/phosphatase (605 aa).

Residues Ala353–Thr359 and Lys374 contribute to the ATP site. Asp413 is a catalytic residue.

The protein belongs to the AceK family.

It is found in the cytoplasm. It carries out the reaction L-seryl-[isocitrate dehydrogenase] + ATP = O-phospho-L-seryl-[isocitrate dehydrogenase] + ADP + H(+). In terms of biological role, bifunctional enzyme which can phosphorylate or dephosphorylate isocitrate dehydrogenase (IDH) on a specific serine residue. This is a regulatory mechanism which enables bacteria to bypass the Krebs cycle via the glyoxylate shunt in response to the source of carbon. When bacteria are grown on glucose, IDH is fully active and unphosphorylated, but when grown on acetate or ethanol, the activity of IDH declines drastically concomitant with its phosphorylation. The chain is Isocitrate dehydrogenase kinase/phosphatase from Rhodopseudomonas palustris (strain HaA2).